The primary structure comprises 246 residues: Acetoacetate decarboxylase (246 aa).

Lys-116 functions as the Schiff-base intermediate with acetoacetate in the catalytic mechanism.

The protein belongs to the ADC family.

The enzyme catalyses acetoacetate + H(+) = acetone + CO2. Catalyzes the conversion of acetoacetate to acetone and carbon dioxide. This is Acetoacetate decarboxylase from Burkholderia vietnamiensis (strain G4 / LMG 22486) (Burkholderia cepacia (strain R1808)).